The primary structure comprises 1857 residues: Chitin synthase Y (1857 aa).

The interval M1–P22 is disordered. Positions M1–E788 constitute a Myosin motor domain. G102–T109 serves as a coordination point for ATP. The segment at S601–S653 is disordered. N-linked (GlcNAc...) asparagine glycosylation is present at N634. The actin-binding stretch occupies residues L668–D692. 2 helical membrane passes run W898–G918 and L937–V957. Positions Q961 to F1020 constitute a Cytochrome b5 heme-binding domain. N-linked (GlcNAc...) asparagine glycans are attached at residues N1047 and N1072. The helical transmembrane segment at F1209–L1229 threads the bilayer. N1572 carries N-linked (GlcNAc...) asparagine glycosylation. The next 3 membrane-spanning stretches (helical) occupy residues L1603–L1623, I1630–I1650, and M1657–F1677. Residues L1799–S1854 enclose the DEK-C domain.

This sequence in the N-terminal section; belongs to the TRAFAC class myosin-kinesin ATPase superfamily. Myosin family. It in the C-terminal section; belongs to the chitin synthase family. Class V subfamily.

The protein resides in the cell membrane. It is found in the cell septum. The protein localises to the cell tip. It carries out the reaction [(1-&gt;4)-N-acetyl-beta-D-glucosaminyl](n) + UDP-N-acetyl-alpha-D-glucosamine = [(1-&gt;4)-N-acetyl-beta-D-glucosaminyl](n+1) + UDP + H(+). Polymerizes chitin, a structural polymer of the cell wall and septum, by transferring the sugar moiety of UDP-GlcNAc to the non-reducing end of the growing chitin polymer. Specifically involved in hyphal elongation and new cell wall formation. This is Chitin synthase Y from Aspergillus oryzae (strain ATCC 42149 / RIB 40) (Yellow koji mold).